The primary structure comprises 215 residues: MLQVYLVRHGETLWNAARRIQGQSDSALTEKGEQQAYQVGQRVRDLGITHVIASDLGRTRRTAEIIADACGCSVVLDPRLRELNMGVLEQRKLDSLSAEEESWRKALVDGTENGRIPQGESMSEMAQRMRQALDACLSLPENSRPLIVSHGMALGVLVSTILGLPANAERRLRLRNCSISRVDHQQSPWLASGWVVETAGDVSHLEDTALDELQR.

Substrate-binding positions include 8–15, 21–22, Arg-58, Arg-60, 82–85, and 151–152; these read RHGETLWN, QG, ELNM, and GM. Residue His-9 is the Tele-phosphohistidine intermediate of the active site. The active-site Proton donor/acceptor is the Glu-82.

This sequence belongs to the phosphoglycerate mutase family. GpmB subfamily.

It carries out the reaction (2R)-2-phosphoglycerate = (2R)-3-phosphoglycerate. The protein operates within carbohydrate degradation; glycolysis; pyruvate from D-glyceraldehyde 3-phosphate: step 3/5. In Erwinia tasmaniensis (strain DSM 17950 / CFBP 7177 / CIP 109463 / NCPPB 4357 / Et1/99), this protein is Probable phosphoglycerate mutase GpmB.